The following is a 359-amino-acid chain: Heat-inducible transcription repressor HrcA (359 aa).

This sequence belongs to the HrcA family.

In terms of biological role, negative regulator of class I heat shock genes (grpE-dnaK-dnaJ and groELS operons). Prevents heat-shock induction of these operons. The sequence is that of Heat-inducible transcription repressor HrcA from Sinorhizobium fredii (strain NBRC 101917 / NGR234).